The primary structure comprises 402 residues: Myb-related protein 1 (402 aa).

The region spanning threonine 42–asparagine 102 is the HTH myb-type domain. Residues proline 73–arginine 98 constitute a DNA-binding region (H-T-H motif). Residues serine 148–glutamine 168 adopt a coiled-coil conformation. The LHEQLE motif lies at leucine 161–glutamate 166. The span at glutamine 238–threonine 260 shows a compositional bias: polar residues. 3 disordered regions span residues glutamine 238 to methionine 266, glutamate 344 to asparagine 363, and histidine 382 to asparagine 402.

The protein belongs to the MYB-CC family. Isoforms 1 and 2: homodimer. Isoform 3: loss of dimerization. Expressed in phloem and/or cambium.

It is found in the nucleus. Transcription factor that may act on the GAL1 promoter. Acts redundantly with MYR2 as a repressor of flowering and organ elongation under decreased light intensity. Represses gibberellic acid (GA)-dependent responses and affects levels of bioactive GA. The sequence is that of Myb-related protein 1 from Arabidopsis thaliana (Mouse-ear cress).